The following is a 386-amino-acid chain: ABC transporter permease protein NatB (386 aa).

The next 6 helical transmembrane spans lie at 19 to 39 (TILLTILVPMIMMLGLVFFYE), 172 to 192 (AIMLSAILPMLILTSIVSGAM), 226 to 246 (WLAVSTFGVASGVFALVFLIL), 273 to 293 (ALIIVLSALLISAMELFISIM), 300 to 320 (AQSYMSLVVFLPVFPMFFIFS), and 353 to 373 (ATILSTSGTIAVLIAIFFLLA).

In terms of assembly, the complex is composed of NatA and NatB.

It localises to the cell membrane. The catalysed reaction is Na(+)(in) + ATP + H2O = Na(+)(out) + ADP + phosphate + H(+). Its function is as follows. Part of an ABC transporter that catalyzes ATP-dependent electrogenic sodium extrusion. This chain is ABC transporter permease protein NatB, found in Bacillus subtilis (strain 168).